Consider the following 429-residue polypeptide: Serine hydroxymethyltransferase (429 aa).

(6S)-5,6,7,8-tetrahydrofolate contacts are provided by residues Leu126 and 130-132 (GHL). N6-(pyridoxal phosphate)lysine is present on Lys235. 359–361 (SPF) provides a ligand contact to (6S)-5,6,7,8-tetrahydrofolate.

Belongs to the SHMT family. Homodimer. Requires pyridoxal 5'-phosphate as cofactor.

Its subcellular location is the cytoplasm. The catalysed reaction is (6R)-5,10-methylene-5,6,7,8-tetrahydrofolate + glycine + H2O = (6S)-5,6,7,8-tetrahydrofolate + L-serine. Its pathway is one-carbon metabolism; tetrahydrofolate interconversion. It functions in the pathway amino-acid biosynthesis; glycine biosynthesis; glycine from L-serine: step 1/1. In terms of biological role, catalyzes the reversible interconversion of serine and glycine with tetrahydrofolate (THF) serving as the one-carbon carrier. This reaction serves as the major source of one-carbon groups required for the biosynthesis of purines, thymidylate, methionine, and other important biomolecules. Also exhibits THF-independent aldolase activity toward beta-hydroxyamino acids, producing glycine and aldehydes, via a retro-aldol mechanism. In Synechococcus sp. (strain CC9311), this protein is Serine hydroxymethyltransferase.